We begin with the raw amino-acid sequence, 666 residues long: Zinc finger MYM-type protein 5 (666 aa).

Residues lysine 85, lysine 88, lysine 146, and lysine 163 each participate in a glycyl lysine isopeptide (Lys-Gly) (interchain with G-Cter in SUMO2) cross-link. Positions 87 to 106 (EKPQGNYSVIPPPSRDLASQ) are disordered. Residues 191–212 (SPDSWISQSASFPRNQKQPGVD) form a disordered region. The span at 194-208 (SWISQSASFPRNQKQ) shows a compositional bias: polar residues. Lysine 222 participates in a covalent cross-link: Glycyl lysine isopeptide (Lys-Gly) (interchain with G-Cter in SUMO2). 4 consecutive MYM-type zinc fingers follow at residues 262 to 296 (HLFCCTTCLSSFSHKRTQNTRSVICKKFASTKKAD), 308 to 348 (QEFC…RHEV), 355 to 390 (HKLCSNHCFNKYRLANGLIMNCCEHCGEYMPSKSTG), and 401 to 428 (KRFCCQSCINEYKQMMETKSKKLTASEN). Glycyl lysine isopeptide (Lys-Gly) (interchain with G-Cter in SUMO2) cross-links involve residues lysine 440, lysine 452, lysine 459, and lysine 549.

As to quaternary structure, interacts (via N-terminal 120 amino acid region) with ETV5 (via C-terminal).

The protein resides in the nucleus. Its function is as follows. Functions as a transcriptional regulator. This is Zinc finger MYM-type protein 5 (ZMYM5) from Macaca fascicularis (Crab-eating macaque).